The primary structure comprises 607 residues: MFSHQDKVGAFYKNNARANSSKLSLVTDEVEERRSPWFLSILLILLVGILILLTITGIRFHQVVKSNLEFNKLLIEDMEKTEAVHHQVKDVLTPLFKIIGDEVGLRLPQKLNEIKQFIVQKTNFFNPNREFDFRELHWCINPPSKVKVNFTQYCEITEFKEATRSVANSILLLTLYRGRDDIFPPYKCRGATTSMGNVFPLAVSLSMSLISKPSEVINMLTAISEGIYGKTYLLVTDDTEENFETPEIRVFEIGFINRWLGDMPLFQTTNYRIISNNSNTKICTIAVGELALASLCTKESTILPNLGDEESQNSVLVVILGLFGATHMDQLEEVIPVAHPSIEKIHITNHRGFIKDSVATWMVPALALSEQGEQINCLSSACKRRTYPMCNQTSWEPFGDKRLPSYGRLTLSLDVSTDLSINVSVAQGPIIFNGDGMDYYEGTLLNSGWLTIPPKNGTILGLINQASKGDQFIVTPHILTFAPRESSTDCHLPIQTYQIQDDDVLLESNLVVLPTQSFEYVVATYDVSRSDHAIVYYVYDPARTVSYTYPFRLRTKGRPDILRIECFVWDGHLWCHQFYRFQLDATNSTSVVENLIRIRFSCDRLDP.

The Intravirion segment spans residues 1–38 (MFSHQDKVGAFYKNNARANSSKLSLVTDEVEERRSPWF). The helical; Signal-anchor for type II membrane protein transmembrane segment at 39–55 (LSILLILLVGILILLTI) threads the bilayer. Over 56–607 (TGIRFHQVVK…IRFSCDRLDP (552 aa)) the chain is Virion surface. 6 N-linked (GlcNAc...) asparagine; by host glycosylation sites follow: asparagine 149, asparagine 276, asparagine 391, asparagine 422, asparagine 456, and asparagine 587.

It belongs to the paramyxoviruses hemagglutinin-neuraminidase family. Non-sialidase subfamily.

It localises to the virion membrane. Its subcellular location is the host membrane. Its function is as follows. Attaches the virus to cell receptors and thereby initiating infection. Binding of H protein to the receptor induces a conformational change that allows the F protein to trigger virion/cell membranes fusion. In Phocidae (true seals), this protein is Hemagglutinin glycoprotein (H).